The chain runs to 482 residues: 23S rRNA (uracil(1939)-C(5))-methyltransferase RlmD (482 aa).

The [4Fe-4S] cluster site is built by C85, C95, C98, and C177. S-adenosyl-L-methionine-binding residues include Q285, F314, N319, E335, N370, and D391. The active-site Nucleophile is C438.

It belongs to the class I-like SAM-binding methyltransferase superfamily. RNA M5U methyltransferase family. RlmD subfamily.

It carries out the reaction uridine(1939) in 23S rRNA + S-adenosyl-L-methionine = 5-methyluridine(1939) in 23S rRNA + S-adenosyl-L-homocysteine + H(+). In terms of biological role, catalyzes the formation of 5-methyl-uridine at position 1939 (m5U1939) in 23S rRNA. The sequence is that of 23S rRNA (uracil(1939)-C(5))-methyltransferase RlmD from Acidovorax sp. (strain JS42).